A 256-amino-acid polypeptide reads, in one-letter code: Pre-mRNA-splicing factor CWC24 (256 aa).

The disordered stretch occupies residues 1–80 (MFKRKKNAGQ…SRNLSKTDEA (80 aa)). Residues 18-34 (SDSSSEGSGDESALSSA) show a composition bias toward low complexity. Positions 45–66 (RTTPTSVATSTKVRAPSFSSTI) are enriched in polar residues. Residues 67–80 (DHSHSRNLSKTDEA) are compositionally biased toward basic and acidic residues. The C3H1-type zinc-finger motif lies at 131–159 (DYQPDVCKDYKLTGFCGYGDSCKFLHMRE). Residues 173–182 (IKNREDDPPR) are compositionally biased toward basic and acidic residues. Residues 173-200 (IKNREDDPPRDAGGVSRDADTATSRADS) form a disordered region. The RING-type zinc finger occupies 206-244 (CPICQGEFKSPVVTQCCHYFCEKCFLAKHKKKQNCFVCG).

This sequence belongs to the CWC24 family. As to quaternary structure, associated with the spliceosome.

It is found in the nucleus. Involved in pre-mRNA splicing. The protein is Pre-mRNA-splicing factor CWC24 (CWC24) of Yarrowia lipolytica (strain CLIB 122 / E 150) (Yeast).